The primary structure comprises 481 residues: tRNA:m(4)X modification enzyme TRM13 homolog (481 aa).

Ala2 is subject to N-acetylalanine. The segment at 56 to 83 adopts a CHHC U11-48K-type zinc-finger fold; sequence RILCPLDPKHTVYEDQLAKHLKKCNSRE. Residues Cys59, His65, His75, and Cys79 each contribute to the Zn(2+) site. Residues 113-140 adopt a coiled-coil conformation; it reads SLSEEQLEKLIKKLRKASEGLNSTLKDH. The segment at 381-408 is disordered; that stretch reads ETSNSTTKRQDNQNDDSEEHDDGGYRIT.

The protein belongs to the methyltransferase TRM13 family.

It catalyses the reaction cytidine(4) in tRNA(Pro) + S-adenosyl-L-methionine = 2'-O-methylcytidine(4) in tRNA(Pro) + S-adenosyl-L-homocysteine + H(+). The enzyme catalyses cytidine(4) in tRNA(Gly)(GCC) + S-adenosyl-L-methionine = 2'-O-methylcytidine(4) in tRNA(Gly)(GCC) + S-adenosyl-L-homocysteine + H(+). The catalysed reaction is adenosine(4) in tRNA(His) + S-adenosyl-L-methionine = 2'-O-methyladenosine(4) in tRNA(His) + S-adenosyl-L-homocysteine + H(+). Functionally, tRNA methylase which 2'-O-methylates cytidine(4) in tRNA(Pro) and tRNA(Gly)(GCC), and adenosine(4) in tRNA(His). This chain is tRNA:m(4)X modification enzyme TRM13 homolog (TRMT13), found in Homo sapiens (Human).